Here is a 20-residue protein sequence, read N- to C-terminus: Conotoxin PnMLKM-D0211 (20 aa).

The propeptide occupies 1–3 (VKR). 3 cysteine pairs are disulfide-bonded: Cys-4-Cys-18, Cys-5-Cys-14, and Cys-10-Cys-17. Pro-16 bears the 4-hydroxyproline mark. A Tryptophan amide modification is found at Trp-19.

The protein belongs to the conotoxin M superfamily. In terms of tissue distribution, expressed by the venom duct.

It localises to the secreted. This chain is Conotoxin PnMLKM-D0211, found in Conus pennaceus (Feathered cone).